The primary structure comprises 213 residues: MILRIPSLLYLFTLLTAVYAVKFDLTSDRNPKPSIIWNFASAHSLVIVTANVPGEPDQQVDIQILDGSERGNVYLSKKDVRGEARLAVTTHESADVGVCLTNRYTGSGNPRVVRSVELDVDIGADAIDYNAIANQESLSILEVEMRKLEAVTKEIVEEMGYLQRREMRMRDTNESTNQRVKVFSVLIICCTIGLGVWQLLHLRSFFKRKYLID.

A signal peptide spans 1-20 (MILRIPSLLYLFTLLTAVYA). Residues 21 to 181 (VKFDLTSDRN…TNESTNQRVK (161 aa)) lie on the Lumenal side of the membrane. Positions 33 to 122 (PSIIWNFASA…VRSVELDVDI (90 aa)) constitute a GOLD domain. The chain crosses the membrane as a helical span at residues 182–202 (VFSVLIICCTIGLGVWQLLHL). The Cytoplasmic segment spans residues 203 to 213 (RSFFKRKYLID).

It belongs to the EMP24/GP25L family.

The protein localises to the endoplasmic reticulum membrane. The protein resides in the golgi apparatus membrane. Functionally, constituent of COPII-coated endoplasmic reticulum-derived transport vesicles. Required for efficient transport of a subset of secretory proteins to the Golgi. Facilitates retrograde transport from the Golgi to the endoplasmic reticulum. The chain is Endoplasmic reticulum vesicle protein 25 (ERV25) from Cryptococcus neoformans var. neoformans serotype D (strain B-3501A) (Filobasidiella neoformans).